We begin with the raw amino-acid sequence, 541 residues long: Chaperonin GroEL (541 aa).

Residues 29–32, 86–90, glycine 413, 478–480, and aspartate 494 contribute to the ATP site; these read TLGP, DGTTT, and DAL.

Belongs to the chaperonin (HSP60) family. In terms of assembly, forms a cylinder of 14 subunits composed of two heptameric rings stacked back-to-back. Interacts with the co-chaperonin GroES.

The protein localises to the cytoplasm. The catalysed reaction is ATP + H2O + a folded polypeptide = ADP + phosphate + an unfolded polypeptide.. Functionally, together with its co-chaperonin GroES, plays an essential role in assisting protein folding. The GroEL-GroES system forms a nano-cage that allows encapsulation of the non-native substrate proteins and provides a physical environment optimized to promote and accelerate protein folding. The chain is Chaperonin GroEL from Alkaliphilus oremlandii (strain OhILAs) (Clostridium oremlandii (strain OhILAs)).